A 119-amino-acid chain; its full sequence is Protein FAM24A-like (119 aa).

A signal peptide spans 1–40 (MYKPFDLRTIITIIIGCGILTAMFLLIGLVLCLYSKISKA).

It belongs to the FAM24 family.

The protein resides in the secreted. The protein is Protein FAM24A-like of Mus musculus (Mouse).